The following is a 142-amino-acid chain: NADH-quinone oxidoreductase subunit A 2 (142 aa).

3 helical membrane passes run 18–38, 73–93, and 104–124; these read FLPLALYTLAASILIGVLLLA, FYLIAIFFIVFDVEAAFIFAW, and GLVHITFFIVILLLGLVWLWL.

The protein belongs to the complex I subunit 3 family. NDH-1 is composed of 14 different subunits. Subunits NuoA, H, J, K, L, M, N constitute the membrane sector of the complex.

The protein localises to the cell inner membrane. It carries out the reaction a quinone + NADH + 5 H(+)(in) = a quinol + NAD(+) + 4 H(+)(out). Functionally, NDH-1 shuttles electrons from NADH, via FMN and iron-sulfur (Fe-S) centers, to quinones in the respiratory chain. The immediate electron acceptor for the enzyme in this species is believed to be ubiquinone. Couples the redox reaction to proton translocation (for every two electrons transferred, four hydrogen ions are translocated across the cytoplasmic membrane), and thus conserves the redox energy in a proton gradient. The protein is NADH-quinone oxidoreductase subunit A 2 of Geobacter sulfurreducens (strain ATCC 51573 / DSM 12127 / PCA).